Reading from the N-terminus, the 157-residue chain is Chromophore lyase CpcS/CpeS 1 (157 aa).

It belongs to the CpcS/CpeS biliprotein lyase family.

Its subcellular location is the plastid. The protein resides in the organellar chromatophore. In terms of biological role, covalently attaches a chromophore to Cys residue(s) of phycobiliproteins. The chain is Chromophore lyase CpcS/CpeS 1 from Paulinella chromatophora.